A 264-amino-acid polypeptide reads, in one-letter code: Thiazole synthase (264 aa).

Catalysis depends on Lys-106, which acts as the Schiff-base intermediate with DXP. 1-deoxy-D-xylulose 5-phosphate contacts are provided by residues Gly-167, 193 to 194 (AG), and 215 to 216 (NT).

Belongs to the ThiG family. As to quaternary structure, homotetramer. Forms heterodimers with either ThiH or ThiS.

It localises to the cytoplasm. The catalysed reaction is [ThiS sulfur-carrier protein]-C-terminal-Gly-aminoethanethioate + 2-iminoacetate + 1-deoxy-D-xylulose 5-phosphate = [ThiS sulfur-carrier protein]-C-terminal Gly-Gly + 2-[(2R,5Z)-2-carboxy-4-methylthiazol-5(2H)-ylidene]ethyl phosphate + 2 H2O + H(+). It participates in cofactor biosynthesis; thiamine diphosphate biosynthesis. Functionally, catalyzes the rearrangement of 1-deoxy-D-xylulose 5-phosphate (DXP) to produce the thiazole phosphate moiety of thiamine. Sulfur is provided by the thiocarboxylate moiety of the carrier protein ThiS. In vitro, sulfur can be provided by H(2)S. The chain is Thiazole synthase from Stenotrophomonas maltophilia (strain R551-3).